The chain runs to 209 residues: Imidazoleglycerol-phosphate dehydratase (209 aa).

It belongs to the imidazoleglycerol-phosphate dehydratase family.

The protein resides in the cytoplasm. The enzyme catalyses D-erythro-1-(imidazol-4-yl)glycerol 3-phosphate = 3-(imidazol-4-yl)-2-oxopropyl phosphate + H2O. Its pathway is amino-acid biosynthesis; L-histidine biosynthesis; L-histidine from 5-phospho-alpha-D-ribose 1-diphosphate: step 6/9. This chain is Imidazoleglycerol-phosphate dehydratase, found in Nostoc sp. (strain PCC 7120 / SAG 25.82 / UTEX 2576).